The primary structure comprises 146 residues: Hemoglobin subunit beta (146 aa).

Position 1 is an N-acetylvaline (Val-1). The Globin domain maps to 2–146; the sequence is HLTPEEKNAV…VANALAHKYH (145 aa). The residue at position 12 (Thr-12) is a Phosphothreonine. Ser-44 is subject to Phosphoserine. An N6-acetyllysine modification is found at Lys-59. His-63 contacts heme b. Position 82 is an N6-acetyllysine (Lys-82). Position 92 (His-92) interacts with heme b. Residue Cys-93 is modified to S-nitrosocysteine. The residue at position 144 (Lys-144) is an N6-acetyllysine.

The protein belongs to the globin family. As to quaternary structure, heterotetramer of two alpha chains and two beta chains. Red blood cells.

Involved in oxygen transport from the lung to the various peripheral tissues. This Papio cynocephalus (Yellow baboon) protein is Hemoglobin subunit beta (HBB).